Consider the following 124-residue polypeptide: Aspartate 1-decarboxylase (124 aa).

Catalysis depends on Ser25, which acts as the Schiff-base intermediate with substrate; via pyruvic acid. Pyruvic acid (Ser) is present on Ser25. Thr57 lines the substrate pocket. The active-site Proton donor is the Tyr58. Residue 73–75 (GAA) participates in substrate binding.

Belongs to the PanD family. As to quaternary structure, heterooctamer of four alpha and four beta subunits. The cofactor is pyruvate. Post-translationally, is synthesized initially as an inactive proenzyme, which is activated by self-cleavage at a specific serine bond to produce a beta-subunit with a hydroxyl group at its C-terminus and an alpha-subunit with a pyruvoyl group at its N-terminus.

Its subcellular location is the cytoplasm. It catalyses the reaction L-aspartate + H(+) = beta-alanine + CO2. It participates in cofactor biosynthesis; (R)-pantothenate biosynthesis; beta-alanine from L-aspartate: step 1/1. Functionally, catalyzes the pyruvoyl-dependent decarboxylation of aspartate to produce beta-alanine. The polypeptide is Aspartate 1-decarboxylase (Clostridium beijerinckii (strain ATCC 51743 / NCIMB 8052) (Clostridium acetobutylicum)).